Here is a 260-residue protein sequence, read N- to C-terminus: Phosphatidate cytidylyltransferase (260 aa).

The next 7 helical transmembrane spans lie at 9–29 (IIALIVFLPVLLKGGLILMLF), 46–66 (MIKFLSIPGIISALGILIIML), 70–90 (AGSWVNDLQLKSLIAMSFILL), 102–122 (FMDAAFCLMSIAYVGIGFMYL), 130–150 (LHYILFAFLVVWLTDTGAYIF), 172–192 (FVGGLICSLIVPLVMMIFVDF), and 196–216 (LWLLLIITIILSMFGQLGDLV).

It belongs to the CDS family.

It is found in the cell membrane. The catalysed reaction is a 1,2-diacyl-sn-glycero-3-phosphate + CTP + H(+) = a CDP-1,2-diacyl-sn-glycerol + diphosphate. The protein operates within phospholipid metabolism; CDP-diacylglycerol biosynthesis; CDP-diacylglycerol from sn-glycerol 3-phosphate: step 3/3. This chain is Phosphatidate cytidylyltransferase (cdsA), found in Staphylococcus saprophyticus subsp. saprophyticus (strain ATCC 15305 / DSM 20229 / NCIMB 8711 / NCTC 7292 / S-41).